Here is a 175-residue protein sequence, read N- to C-terminus: ATP synthase subunit b 2 (175 aa).

Residues 20–40 form a helical membrane-spanning segment; the sequence is LIFWTTITFVLVLIILKKIAW.

This sequence belongs to the ATPase B chain family. F-type ATPases have 2 components, F(1) - the catalytic core - and F(0) - the membrane proton channel. F(1) has five subunits: alpha(3), beta(3), gamma(1), delta(1), epsilon(1). F(0) has four main subunits: a(1), b(2) and c(10-14). The alpha and beta chains form an alternating ring which encloses part of the gamma chain. F(1) is attached to F(0) by a central stalk formed by the gamma and epsilon chains, while a peripheral stalk is formed by the delta and b chains.

Its subcellular location is the cell inner membrane. Its function is as follows. F(1)F(0) ATP synthase produces ATP from ADP in the presence of a proton or sodium gradient. F-type ATPases consist of two structural domains, F(1) containing the extramembraneous catalytic core and F(0) containing the membrane proton channel, linked together by a central stalk and a peripheral stalk. During catalysis, ATP synthesis in the catalytic domain of F(1) is coupled via a rotary mechanism of the central stalk subunits to proton translocation. Component of the F(0) channel, it forms part of the peripheral stalk, linking F(1) to F(0). The chain is ATP synthase subunit b 2 from Chlorobium luteolum (strain DSM 273 / BCRC 81028 / 2530) (Pelodictyon luteolum).